Reading from the N-terminus, the 134-residue chain is Profilin-2 (134 aa).

A disulfide bridge connects residues Cys13 and Cys118. The Involved in PIP2 interaction signature appears at 84–100 (AVIRGKKGSGGITIKKT). Residue Thr114 is modified to Phosphothreonine.

This sequence belongs to the profilin family. As to quaternary structure, occurs in many kinds of cells as a complex with monomeric actin in a 1:1 ratio. Phosphorylated by MAP kinases.

It localises to the cytoplasm. The protein resides in the cytoskeleton. Its function is as follows. Binds to actin and affects the structure of the cytoskeleton. At high concentrations, profilin prevents the polymerization of actin, whereas it enhances it at low concentrations. The polypeptide is Profilin-2 (Olea europaea (Common olive)).